Reading from the N-terminus, the 434-residue chain is tRNA modification GTPase MnmE (434 aa).

(6S)-5-formyl-5,6,7,8-tetrahydrofolate is bound by residues Arg20, Glu79, and Val119. The TrmE-type G domain maps to 219–361 (GLRVVLAGRP…LQEKLVEIGK (143 aa)). GTP contacts are provided by residues 229-234 (NAGKST), 248-254 (APIAGTT), and 273-276 (DTAG). 2 residues coordinate Mg(2+): Ser233 and Thr254. Lys434 serves as a coordination point for (6S)-5-formyl-5,6,7,8-tetrahydrofolate.

This sequence belongs to the TRAFAC class TrmE-Era-EngA-EngB-Septin-like GTPase superfamily. TrmE GTPase family. Homodimer. Heterotetramer of two MnmE and two MnmG subunits. K(+) serves as cofactor.

The protein resides in the cytoplasm. Its function is as follows. Exhibits a very high intrinsic GTPase hydrolysis rate. Involved in the addition of a carboxymethylaminomethyl (cmnm) group at the wobble position (U34) of certain tRNAs, forming tRNA-cmnm(5)s(2)U34. The sequence is that of tRNA modification GTPase MnmE from Zymomonas mobilis subsp. mobilis (strain ATCC 31821 / ZM4 / CP4).